A 324-amino-acid polypeptide reads, in one-letter code: tRNA uridine(34) hydroxylase (324 aa).

The Rhodanese domain occupies 127–221 (QQEETIVIDA…YGKDPEVQGE (95 aa)). Catalysis depends on cysteine 181, which acts as the Cysteine persulfide intermediate.

The protein belongs to the TrhO family.

The enzyme catalyses uridine(34) in tRNA + AH2 + O2 = 5-hydroxyuridine(34) in tRNA + A + H2O. Catalyzes oxygen-dependent 5-hydroxyuridine (ho5U) modification at position 34 in tRNAs. The sequence is that of tRNA uridine(34) hydroxylase from Bacillus cytotoxicus (strain DSM 22905 / CIP 110041 / 391-98 / NVH 391-98).